The following is a 1209-amino-acid chain: Major DNA-binding protein (1209 aa).

The disordered stretch occupies residues 290 to 312 (NAGKGSGRAQRQGDGSGSKNSAS). The segment at 503–516 (CGLCNQATRPACAH) is a zinc-finger region. The Required for filament formation signature appears at 849–850 (FW). Residues 1182 to 1209 (QKRSLPDDILFDMGAPPEKKSGLTFDML) form a required for nuclear localization region.

This sequence belongs to the herpesviridae major DNA-binding protein family. Homooligomers. Forms double-helical filaments necessary for the formation of replication compartments within the host nucleus. Interacts with the origin-binding protein. Interacts with the helicase primase complex; this interaction stimulates primer synthesis activity of the helicase-primase complex. Interacts with the DNA polymerase. Interacts with the alkaline exonuclease; this interaction increases its nuclease processivity.

Its subcellular location is the host nucleus. Plays several crucial roles in viral infection. Participates in the opening of the viral DNA origin to initiate replication by interacting with the origin-binding protein. May disrupt loops, hairpins and other secondary structures present on ssDNA to reduce and eliminate pausing of viral DNA polymerase at specific sites during elongation. Promotes viral DNA recombination by performing strand-transfer, characterized by the ability to transfer a DNA strand from a linear duplex to a complementary single-stranded DNA circle. Can also catalyze the renaturation of complementary single strands. Additionally, reorganizes the host cell nucleus, leading to the formation of prereplicative sites and replication compartments. This process is driven by the protein which can form double-helical filaments in the absence of DNA. The polypeptide is Major DNA-binding protein (Equine herpesvirus 1 (strain Ab4p) (EHV-1)).